Reading from the N-terminus, the 108-residue chain is Parvalbumin beta (108 aa).

A1 carries the post-translational modification N-acetylalanine. EF-hand domains lie at 38–73 (KSNEELEAIFKILDQDKSGFIEDEELELFLQNFSAG) and 77–108 (LTKTETETFLKAGDSDGDGKIGVDEFQKLVKA). 11 residues coordinate Ca(2+): D51, D53, S55, F57, E59, E62, D90, D92, D94, K96, and E101.

This sequence belongs to the parvalbumin family.

Functionally, in muscle, parvalbumin is thought to be involved in relaxation after contraction. It binds two calcium ions. This Latimeria chalumnae (Coelacanth) protein is Parvalbumin beta.